The primary structure comprises 345 residues: Acyl-CoA--sterol O-acyltransferase 1 (345 aa).

9 consecutive transmembrane segments (helical) span residues 1 to 21 (MASF…TFFI), 32 to 52 (LILF…IYSL), 54 to 74 (LLGI…LLFA), 86 to 106 (PLSL…QLSP), 120 to 140 (GPLI…AYEY), 148 to 168 (VVLT…LAAT), 231 to 251 (ILAA…IFFY), 258 to 278 (DWKM…EIAI), and 291 to 311 (AISQ…LFLP).

Belongs to the wax synthase family.

Its subcellular location is the membrane. In terms of biological role, involved in the esterification of cycloartenol. Not implicated in the formation of sterol esters in flowers or during seed maturation. Has a substrate preference toward saturated fatty acyl donors (16:0 &gt; 18:0 &gt; 16:1 &gt; 18:1). Does not require triacyglycerols (TAGs) as a fatty acyl donor, and is unable to acylate diacylglycerol to produce TAG. This is Acyl-CoA--sterol O-acyltransferase 1 (ASAT1) from Arabidopsis thaliana (Mouse-ear cress).